The following is a 221-amino-acid chain: Hypoxanthine-guanine phosphoribosyltransferase (221 aa).

At serine 2 the chain carries N-acetylserine. GMP is bound by residues lysine 85, 110-118 (DEVDDTRTT), lysine 159, and 188-194 (WYAYPWE). Aspartate 114 functions as the Proton acceptor in the catalytic mechanism.

It belongs to the purine/pyrimidine phosphoribosyltransferase family. As to quaternary structure, dimer. Mg(2+) serves as cofactor.

It is found in the cytoplasm. Its subcellular location is the nucleus. It carries out the reaction IMP + diphosphate = hypoxanthine + 5-phospho-alpha-D-ribose 1-diphosphate. It catalyses the reaction GMP + diphosphate = guanine + 5-phospho-alpha-D-ribose 1-diphosphate. The protein operates within purine metabolism; IMP biosynthesis via salvage pathway; IMP from hypoxanthine: step 1/1. Subject to feedback inhibition by GMP. In terms of biological role, converts guanine to guanosine monophosphate, and hypoxanthine to inosine monophosphate. Transfers the 5-phosphoribosyl group from 5-phosphoribosylpyrophosphate onto the purine. Plays a central role in the generation of purine nucleotides through the purine salvage pathway. This Saccharomyces cerevisiae (strain ATCC 204508 / S288c) (Baker's yeast) protein is Hypoxanthine-guanine phosphoribosyltransferase (HPT1).